The sequence spans 212 residues: Methylthioribulose-1-phosphate dehydratase (212 aa).

2 residues coordinate Zn(2+): histidine 97 and histidine 99.

This sequence belongs to the aldolase class II family. MtnB subfamily. Homotetramer. It depends on Zn(2+) as a cofactor.

It catalyses the reaction 5-(methylsulfanyl)-D-ribulose 1-phosphate = 5-methylsulfanyl-2,3-dioxopentyl phosphate + H2O. Its pathway is amino-acid biosynthesis; L-methionine biosynthesis via salvage pathway; L-methionine from S-methyl-5-thio-alpha-D-ribose 1-phosphate: step 2/6. Catalyzes the dehydration of methylthioribulose-1-phosphate (MTRu-1-P) into 2,3-diketo-5-methylthiopentyl-1-phosphate (DK-MTP-1-P). This chain is Methylthioribulose-1-phosphate dehydratase, found in Bacillus thuringiensis (strain Al Hakam).